The following is a 959-amino-acid chain: AP2-associated protein kinase 1 (959 aa).

Methionine 1 is modified (N-acetylmethionine). The span at 1 to 11 (MKKFFDSRREQ) shows a compositional bias: basic and acidic residues. The tract at residues 1–27 (MKKFFDSRREQGSSGLGSGSSGGGGSS) is disordered. The residue at position 14 (serine 14) is a Phosphoserine. The segment covering 14 to 27 (SGLGSGSSGGGGSS) has biased composition (gly residues). Residues 46–315 (VTVDEVLAEG…QVSYFSFKLL (270 aa)) form the Protein kinase domain. ATP contacts are provided by residues 52–60 (LAEGGFALV) and lysine 74. Catalysis depends on aspartate 176, which acts as the Proton acceptor. Phosphotyrosine is present on tyrosine 234. The residue at position 235 (serine 235) is a Phosphoserine. The disordered stretch occupies residues 340–385 (SEAAVKKTQPKARLTDPIPTTETSIAPRQRPKAGQTQPNPGILPIQ). 2 positions are modified to phosphothreonine: threonine 354 and threonine 389. Arginine 391 carries the post-translational modification Omega-N-methylarginine. Disordered regions lie at residues 398–514 (PLPQ…AVHP) and 578–630 (TAPQ…RAGH). Residues 404 to 419 (GPSNQPGLLPSVSQPK) are compositionally biased toward polar residues. Positions 420–435 (AQATPSQPLQSSQPKQ) are enriched in low complexity. Phosphothreonine is present on threonine 441. Composition is skewed to low complexity over residues 444–481 (QTPA…QPQQ), 494–510 (QQQQ…QQFQ), and 578–603 (TAPQ…KVQT). Threonine 604 carries the post-translational modification Phosphothreonine. A compositionally biased stretch (polar residues) spans 609 to 625 (IQGQKVGSLTPPSSPKT). Position 616 is a phosphoserine (serine 616). Position 618 is a phosphothreonine (threonine 618). Residues serine 621, serine 622, serine 635, and serine 648 each carry the phosphoserine modification. Threonine 651 is subject to Phosphothreonine. Disordered stretches follow at residues 662 to 699 (SLNK…FDDD), 727 to 763 (GGSA…GGQA), 837 to 857 (PVAQ…TDSL), and 923 to 943 (ITKN…ESSL). The span at 670 to 694 (TTTPSGSPRTSQQNVSNASEGSTWN) shows a compositional bias: polar residues. At serine 729 the chain carries Phosphoserine. 2 stretches are compositionally biased toward polar residues: residues 738-752 (QPTQ…SFSA) and 842-857 (LPSQ…TDSL). The segment at 821–958 (DKADVAVESL…SLLLVDQLID (138 aa)) is clathrin-binding domain (CBD). Serine 844, serine 935, and serine 936 each carry phosphoserine. The segment covering 929–942 (GGHSRNSSGSSESS) has biased composition (low complexity).

This sequence belongs to the protein kinase superfamily. Ser/Thr protein kinase family. As to quaternary structure, interacts (via CBD domain) with clathrin. Interacts with AP-2 complex. Interacts with NUMB. Interacts with alpha-adaptin. Interacts with EPS15 isoform 2. Interacts with membrane-bound activated NOTCH1 but not with the inactive full-length form of NOTCH1. Preferentially interacts with monoubiquitinated activated NOTCH1 compared to the non-ubiquitinated form. Post-translationally, autophosphorylated.

The protein localises to the cell membrane. Its subcellular location is the membrane. It is found in the clathrin-coated pit. It localises to the presynapse. It catalyses the reaction L-seryl-[protein] + ATP = O-phospho-L-seryl-[protein] + ADP + H(+). The enzyme catalyses L-threonyl-[protein] + ATP = O-phospho-L-threonyl-[protein] + ADP + H(+). Its activity is regulated as follows. Stimulated by clathrin. Regulates clathrin-mediated endocytosis by phosphorylating the AP2M1/mu2 subunit of the adaptor protein complex 2 (AP-2) which ensures high affinity binding of AP-2 to cargo membrane proteins during the initial stages of endocytosis. Preferentially, may phosphorylate substrates on threonine residues. Regulates phosphorylation of other AP-2 subunits as well as AP-2 localization and AP-2-mediated internalization of ligand complexes. Phosphorylates NUMB and regulates its cellular localization, promoting NUMB localization to endosomes. Binds to and stabilizes the activated form of NOTCH1, increases its localization in endosomes and regulates its transcriptional activity. The sequence is that of AP2-associated protein kinase 1 (Aak1) from Mus musculus (Mouse).